Consider the following 48-residue polypeptide: MTNKNTSKDMHKNAPKGHNPGQPEPLSGSKKVKNRNHTRQKHNTSHDM.

A compositionally biased stretch (basic and acidic residues) spans 1–12 (MTNKNTSKDMHK). Residues 1-48 (MTNKNTSKDMHKNAPKGHNPGQPEPLSGSKKVKNRNHTRQKHNTSHDM) form a disordered region. Positions 30 to 48 (KKVKNRNHTRQKHNTSHDM) are enriched in basic residues.

Belongs to the SspP family.

The protein resides in the spore core. The polypeptide is Small, acid-soluble spore protein P (Bacillus velezensis (strain DSM 23117 / BGSC 10A6 / LMG 26770 / FZB42) (Bacillus amyloliquefaciens subsp. plantarum)).